Reading from the N-terminus, the 339-residue chain is MADLKPYIAKAASGEPLSLGDAKAAFDIMMSGQATPSQIGGFLMALRVRGETVPEIAGAVASMRSRMIPVIAPDDAMDIVGTGGDQSGSYNVSSCTAFVVAGAGVPVAKHGNRALSSRSGAADALAALGINIEADADTIGRSISEAGLGFMFAPMHHSAMRHVGPSRVELGTRTIFNLLGPLSNPASVKRQLVGVFAPQWLEPLAHVLKELGSETAWVVYGDGLDEMTTAGTTQVAALENGQIRTFEITPEEVGLRRCSPAELKGGEAAENAKALLGVLEGKDSAYRDIVLLNSGAALVVAGKAENLKDGIAQAVQSIDSGAALAVLQKVIAVSNDKPA.

5-phospho-alpha-D-ribose 1-diphosphate-binding positions include Gly-81, 84 to 85 (GD), Ser-89, 91 to 94 (NVSS), 109 to 117 (KHGNRALSS), and Ala-121. Gly-81 lines the anthranilate pocket. Position 93 (Ser-93) interacts with Mg(2+). Asn-112 is an anthranilate binding site. Arg-167 is an anthranilate binding site. Positions 225 and 226 each coordinate Mg(2+).

The protein belongs to the anthranilate phosphoribosyltransferase family. As to quaternary structure, homodimer. The cofactor is Mg(2+).

It catalyses the reaction N-(5-phospho-beta-D-ribosyl)anthranilate + diphosphate = 5-phospho-alpha-D-ribose 1-diphosphate + anthranilate. It functions in the pathway amino-acid biosynthesis; L-tryptophan biosynthesis; L-tryptophan from chorismate: step 2/5. Its function is as follows. Catalyzes the transfer of the phosphoribosyl group of 5-phosphorylribose-1-pyrophosphate (PRPP) to anthranilate to yield N-(5'-phosphoribosyl)-anthranilate (PRA). In Brucella canis (strain ATCC 23365 / NCTC 10854 / RM-666), this protein is Anthranilate phosphoribosyltransferase.